Reading from the N-terminus, the 78-residue chain is Large ribosomal subunit protein bL28 (78 aa).

The interval Met-1–Ala-21 is disordered.

This sequence belongs to the bacterial ribosomal protein bL28 family.

In Shewanella woodyi (strain ATCC 51908 / MS32), this protein is Large ribosomal subunit protein bL28.